The sequence spans 338 residues: GDSL esterase/lipase At5g63170 (338 aa).

The N-terminal stretch at 1–23 (MNSLVIQTTIVLVSVISVSIVHA) is a signal peptide. The Nucleophile role is filled by Ser-35. Residues Asp-313 and His-316 contribute to the active site.

It belongs to the 'GDSL' lipolytic enzyme family.

The protein localises to the secreted. The sequence is that of GDSL esterase/lipase At5g63170 from Arabidopsis thaliana (Mouse-ear cress).